The following is a 404-amino-acid chain: S-adenosylmethionine synthase (404 aa).

His-16 lines the ATP pocket. Asp-18 contacts Mg(2+). Glu-44 lines the K(+) pocket. L-methionine-binding residues include Glu-57 and Gln-100. The flexible loop stretch occupies residues 100–110; that stretch reads QSPEINQGVAR. ATP contacts are provided by residues 177–179, Asp-257, 263–264, Ala-280, and Lys-284; these read DGK and RK. Asp-257 provides a ligand contact to L-methionine. Lys-288 contributes to the L-methionine binding site.

This sequence belongs to the AdoMet synthase family. As to quaternary structure, homotetramer; dimer of dimers. Mg(2+) serves as cofactor. The cofactor is K(+).

The protein resides in the cytoplasm. It carries out the reaction L-methionine + ATP + H2O = S-adenosyl-L-methionine + phosphate + diphosphate. The protein operates within amino-acid biosynthesis; S-adenosyl-L-methionine biosynthesis; S-adenosyl-L-methionine from L-methionine: step 1/1. Functionally, catalyzes the formation of S-adenosylmethionine (AdoMet) from methionine and ATP. The overall synthetic reaction is composed of two sequential steps, AdoMet formation and the subsequent tripolyphosphate hydrolysis which occurs prior to release of AdoMet from the enzyme. The sequence is that of S-adenosylmethionine synthase from Bifidobacterium adolescentis (strain ATCC 15703 / DSM 20083 / NCTC 11814 / E194a).